Reading from the N-terminus, the 347-residue chain is Quinolinate synthase (347 aa).

Residues His-47 and Ser-68 each coordinate iminosuccinate. Cys-113 contributes to the [4Fe-4S] cluster binding site. Iminosuccinate is bound by residues 139-141 and Ser-156; that span reads YAN. Cys-200 is a binding site for [4Fe-4S] cluster. Iminosuccinate-binding positions include 226–228 and Thr-243; that span reads HPE. [4Fe-4S] cluster is bound at residue Cys-297.

The protein belongs to the quinolinate synthase family. Type 1 subfamily. [4Fe-4S] cluster serves as cofactor.

It is found in the cytoplasm. It carries out the reaction iminosuccinate + dihydroxyacetone phosphate = quinolinate + phosphate + 2 H2O + H(+). It functions in the pathway cofactor biosynthesis; NAD(+) biosynthesis; quinolinate from iminoaspartate: step 1/1. In terms of biological role, catalyzes the condensation of iminoaspartate with dihydroxyacetone phosphate to form quinolinate. The sequence is that of Quinolinate synthase from Shigella dysenteriae serotype 1 (strain Sd197).